The chain runs to 250 residues: Kv channel-interacting protein 4 (250 aa).

The KIS stretch occupies residues 2–44 (NVRRVESISAQLEEASSTGGFLYAQNNTKRSIKERLMKLLPCS). Residues Ser-17 and Ser-56 each carry the phosphoserine modification. An EF-hand 1; degenerate domain is found at 61–117 (LEMATVRHRPEALELLEAQSKFTKKELQILYRGFKNECPSGVVNEETFKEIYSQFFP). 3 EF-hand domains span residues 120–155 (DSTT…LLRG), 156–191 (TVQE…IYDM), and 204–239 (APRQ…DENI). Ca(2+) is bound by residues Asp-133, Asp-135, Asn-137, Asp-144, Asp-169, Asn-171, Asp-173, Tyr-175, Glu-180, Asp-217, Asn-219, Asp-221, and Glu-228. The interval 237–250 (ENIMRSMQLFENVI) is interaction with KCND2.

Belongs to the recoverin family. In terms of assembly, component of heteromultimeric potassium channels. Identified in potassium channel complexes containing KCND1, KCND2, KCND3, KCNIP1, KCNIP2, KCNIP3, KCNIP4, DPP6 and DPP10. Interacts with the C-terminus of PSEN2 and probably PSEN1. Interacts with KCND2 and KCND3. In terms of tissue distribution, expressed in brain. Highly expressed by neurons in layers II-IV of cortex and in hippocampus, thalamus and the Purkinje cell layer of the cerebellum.

It localises to the cell membrane. The protein localises to the cytoplasm. The protein resides in the peroxisome. In terms of biological role, regulatory subunit of Kv4/D (Shal)-type voltage-gated rapidly inactivating A-type potassium channels, such as KCND2/Kv4.2 and KCND3/Kv4.3. Modulates channel expression at the cell membrane, gating characteristics, inactivation kinetics and rate of recovery from inactivation in a calcium-dependent and isoform-specific manner. The chain is Kv channel-interacting protein 4 (Kcnip4) from Mus musculus (Mouse).